The primary structure comprises 899 residues: Protein translocase subunit SecA (899 aa).

ATP is bound by residues Q87, 105–109, and D516; that span reads GEGKT. Residues C884, C886, C895, and H896 each coordinate Zn(2+).

The protein belongs to the SecA family. In terms of assembly, monomer and homodimer. Part of the essential Sec protein translocation apparatus which comprises SecA, SecYEG and auxiliary proteins SecDF. Other proteins may also be involved. Zn(2+) is required as a cofactor.

The protein localises to the cell inner membrane. The protein resides in the cytoplasm. The catalysed reaction is ATP + H2O + cellular proteinSide 1 = ADP + phosphate + cellular proteinSide 2.. In terms of biological role, part of the Sec protein translocase complex. Interacts with the SecYEG preprotein conducting channel. Has a central role in coupling the hydrolysis of ATP to the transfer of proteins into and across the cell membrane, serving as an ATP-driven molecular motor driving the stepwise translocation of polypeptide chains across the membrane. This is Protein translocase subunit SecA from Borreliella burgdorferi (strain ZS7) (Borrelia burgdorferi).